The primary structure comprises 122 residues: Protein MGF 100-1R (122 aa).

This sequence belongs to the asfivirus MGF 100 family.

Functionally, plays a role in virus cell tropism, and may be required for efficient virus replication in macrophages. This chain is Protein MGF 100-1R, found in Ornithodoros (relapsing fever ticks).